A 580-amino-acid polypeptide reads, in one-letter code: 9,13-epoxylabda-14-ene synthase, chloroplastic (580 aa).

The N-terminal 32 residues, Met-1–Thr-32, are a transit peptide targeting the chloroplast. Mg(2+)-binding residues include Asp-322, Asp-326, Asn-466, Thr-470, and Glu-474. A DDXXD motif motif is present at residues Asp-322–Asp-326.

Belongs to the terpene synthase family. The cofactor is Mg(2+). In terms of tissue distribution, present in both leaves and flowers, with higher levels in leaves.

The protein resides in the plastid. It localises to the chloroplast. The enzyme catalyses peregrinol diphosphate = (13R)-9,13-epoxylabd-14-ene + diphosphate. It carries out the reaction (+)-copalyl diphosphate = miltiradiene + diphosphate. It catalyses the reaction 8-hydroxycopalyl diphosphate = (13R)-manoyl oxide + diphosphate. It participates in secondary metabolite biosynthesis; terpenoid biosynthesis. Functionally, involved in the biosynthesis of labdane-type diterpenoid including marrubiin and other labdane-related furanoid diterpenoids with potential applications as anti-diabetics, analgesics or vasorelaxants. Terpene synthase the catalyzes the conversion of peregrinol diphosphate to 9,13(R)-epoxy-labd-14-ene, from (+)-copalyl diphosphate ((+)-CPP) to miltiradiene and from 8-hydroxycopalyl diphosphate (LPP, labda-13-en-8-ol diphosphate) to manoyl oxide. The polypeptide is 9,13-epoxylabda-14-ene synthase, chloroplastic (Marrubium vulgare (White horehound)).